Reading from the N-terminus, the 107-residue chain is Small polypeptide DEVIL 9 (107 aa).

Positions 1–12 are enriched in basic and acidic residues; the sequence is MDEKWRLSKKDA. Residues 1 to 79 form a disordered region; that stretch reads MDEKWRLSKK…EKGSITQKYS (79 aa). The helical transmembrane segment at 9–29 threads the bilayer; the sequence is KKDALAASCSSSSTSSKSKFS. Residues 13-65 show a composition bias toward low complexity; sequence LAASCSSSSTSSKSKFSRSFSTSASSSKAPAFVRSSSTKCSVPSSSSSSISRS. Residues 73–104 form a required for DVL/RTFL small polypeptide activity region; the sequence is SITQKYSSLAKEQKGRFYIMRRCVAMLVCWHK.

Belongs to the DVL/RTFL small polypeptides family.

Its subcellular location is the cell membrane. Functionally, small polypeptide acting as a regulatory molecule which coordinates cellular responses required for differentiation, growth and development, probably by restricting polar cell proliferation in lateral organs and coordinating socket cell recruitment and differentiation at trichome sites. The protein is Small polypeptide DEVIL 9 of Arabidopsis thaliana (Mouse-ear cress).